We begin with the raw amino-acid sequence, 132 residues long: Small ribosomal subunit protein uS8c (132 aa).

It belongs to the universal ribosomal protein uS8 family. As to quaternary structure, part of the 30S ribosomal subunit.

The protein resides in the plastid. It is found in the chloroplast. Its function is as follows. One of the primary rRNA binding proteins, it binds directly to 16S rRNA central domain where it helps coordinate assembly of the platform of the 30S subunit. The chain is Small ribosomal subunit protein uS8c (rps8) from Calycanthus floridus var. glaucus (Eastern sweetshrub).